A 765-amino-acid polypeptide reads, in one-letter code: Amine oxidase [copper-containing] 3 (765 aa).

At 1-6 (MTQKTT) the chain is on the cytoplasmic side. The chain crosses the membrane as a helical; Signal-anchor for type II membrane protein span at residues 7-27 (LVLLALAVITIFALVCVLLAG). Residues 28–765 (RSGDGGGLSQ…SHGGFAYRDN (738 aa)) are Extracellular-facing. Asn-137 carries an N-linked (GlcNAc...) asparagine glycan. An intrachain disulfide couples Cys-198 to Cys-199. Residues Asn-232 and Asn-294 are each glycosylated (N-linked (GlcNAc...) asparagine). Asp-386 serves as the catalytic Proton acceptor. Cys-404 and Cys-430 form a disulfide bridge. Residue Tyr-471 is the Schiff-base intermediate with substrate; via topaquinone of the active site. 2',4',5'-topaquinone is present on Tyr-471. His-520 and His-522 together coordinate Cu(2+). Residues Asp-529, Leu-530, Asp-531, and Glu-572 each coordinate Ca(2+). Asn-592 is a glycosylation site (N-linked (GlcNAc...) asparagine). Glu-641 lines the Ca(2+) pocket. Asn-659 carries N-linked (GlcNAc...) asparagine glycosylation. Ca(2+) is bound at residue Phe-663. Residue Asn-666 is glycosylated (N-linked (GlcNAc...) asparagine). 3 residues coordinate Ca(2+): Glu-667, Asp-673, and Leu-674. Residue His-684 coordinates Cu(2+). Cys-734 and Cys-741 are oxidised to a cystine.

This sequence belongs to the copper/topaquinone oxidase family. Homodimer; disulfide-linked. Probably forms heterodimers with AOC2. Cu(2+) is required as a cofactor. The cofactor is Ca(2+). It depends on L-topaquinone as a cofactor. In terms of processing, topaquinone (TPQ) is generated by copper-dependent autoxidation of a specific tyrosyl residue. N- and O-glycosylated.

The protein localises to the cell membrane. It carries out the reaction methylamine + O2 + H2O = formaldehyde + H2O2 + NH4(+). The enzyme catalyses benzylamine + O2 + H2O = benzaldehyde + H2O2 + NH4(+). The catalysed reaction is 2-phenylethylamine + O2 + H2O = 2-phenylacetaldehyde + H2O2 + NH4(+). Catalyzes the oxidative deamination of primary amines to the corresponding aldehydes with the concomitant production of hydrogen peroxide and ammonia. Has a preference for the primary monoamines methylamine and benzylamine. Could also act on 2-phenylethylamine but much less efficiently. At endothelial cells surface can also function as a cell adhesion protein that participates in lymphocyte extravasation and recirculation by mediating the binding of lymphocytes to peripheral lymph node vascular endothelial cells in an L-selectin-independent fashion. This is Amine oxidase [copper-containing] 3 from Mus musculus (Mouse).